The chain runs to 417 residues: Serine hydroxymethyltransferase (417 aa).

(6S)-5,6,7,8-tetrahydrofolate contacts are provided by residues Leu-112 and 116-118 (GHL). The residue at position 221 (Lys-221) is an N6-(pyridoxal phosphate)lysine. Glu-247 contacts (6S)-5,6,7,8-tetrahydrofolate.

The protein belongs to the SHMT family. In terms of assembly, homodimer. Pyridoxal 5'-phosphate is required as a cofactor.

It localises to the cytoplasm. It catalyses the reaction (6R)-5,10-methylene-5,6,7,8-tetrahydrofolate + glycine + H2O = (6S)-5,6,7,8-tetrahydrofolate + L-serine. Its pathway is one-carbon metabolism; tetrahydrofolate interconversion. The protein operates within amino-acid biosynthesis; glycine biosynthesis; glycine from L-serine: step 1/1. In terms of biological role, catalyzes the reversible interconversion of serine and glycine with tetrahydrofolate (THF) serving as the one-carbon carrier. This reaction serves as the major source of one-carbon groups required for the biosynthesis of purines, thymidylate, methionine, and other important biomolecules. Also exhibits THF-independent aldolase activity toward beta-hydroxyamino acids, producing glycine and aldehydes, via a retro-aldol mechanism. This Borrelia hermsii (strain HS1 / DAH) protein is Serine hydroxymethyltransferase.